We begin with the raw amino-acid sequence, 388 residues long: MSEQIVTPDTAALTVPNKDAKINLLDLNRQQMREFFKNMGEKPFRADQVMKWMYHYCCDDFDEMTDINKVLRGKLKEVAEIRAPEVVEEQRSTDGTIKWAIAVGDQRVETVYIPEEDRATLCVSSQVGCALECKFCSTAQQGFNRNLRVSEIIGQVWRAAKIVGAVKTTGVRPITNVVMMGMGEPLLNLNNVVPAMEIMLDDFGFGLSKRRVTLSTSGVVPALDKLGDMIDVALAISLHAPNDTIRDEIVPINKKYNIETFLNSVRGYISKSNANQGRVTIEYVMLDHVNDGTEHAHELAALLKDTPCKINLIPWNPFPGAPYGRSSNSRIDRFSKVLMEYGFTTIVRKTRGDDIDAACGQLAGDVIDRTKRTLRKRMQGEAIDVKAV.

E109 acts as the Proton acceptor in catalysis. A Radical SAM core domain is found at 115–354; that stretch reads EEDRATLCVS…TIVRKTRGDD (240 aa). A disulfide bridge connects residues C122 and C359. Positions 129, 133, and 136 each coordinate [4Fe-4S] cluster. S-adenosyl-L-methionine-binding positions include 183 to 184, S215, 237 to 239, and N316; these read GE and SLH. C359 serves as the catalytic S-methylcysteine intermediate.

This sequence belongs to the radical SAM superfamily. RlmN family. It depends on [4Fe-4S] cluster as a cofactor.

Its subcellular location is the cytoplasm. It carries out the reaction adenosine(2503) in 23S rRNA + 2 reduced [2Fe-2S]-[ferredoxin] + 2 S-adenosyl-L-methionine = 2-methyladenosine(2503) in 23S rRNA + 5'-deoxyadenosine + L-methionine + 2 oxidized [2Fe-2S]-[ferredoxin] + S-adenosyl-L-homocysteine. The catalysed reaction is adenosine(37) in tRNA + 2 reduced [2Fe-2S]-[ferredoxin] + 2 S-adenosyl-L-methionine = 2-methyladenosine(37) in tRNA + 5'-deoxyadenosine + L-methionine + 2 oxidized [2Fe-2S]-[ferredoxin] + S-adenosyl-L-homocysteine. Specifically methylates position 2 of adenine 2503 in 23S rRNA and position 2 of adenine 37 in tRNAs. m2A2503 modification seems to play a crucial role in the proofreading step occurring at the peptidyl transferase center and thus would serve to optimize ribosomal fidelity. The protein is Dual-specificity RNA methyltransferase RlmN of Klebsiella pneumoniae (strain 342).